The primary structure comprises 316 residues: tRNA dimethylallyltransferase (316 aa).

19–26 (GPTASGKT) is a binding site for ATP. Position 21–26 (21–26 (TASGKT)) interacts with substrate. Interaction with substrate tRNA regions lie at residues 44-47 (DSAL), 168-172 (QRITR), and 249-254 (RCVGYR).

The protein belongs to the IPP transferase family. As to quaternary structure, monomer. Requires Mg(2+) as cofactor.

It carries out the reaction adenosine(37) in tRNA + dimethylallyl diphosphate = N(6)-dimethylallyladenosine(37) in tRNA + diphosphate. Functionally, catalyzes the transfer of a dimethylallyl group onto the adenine at position 37 in tRNAs that read codons beginning with uridine, leading to the formation of N6-(dimethylallyl)adenosine (i(6)A). The protein is tRNA dimethylallyltransferase of Colwellia psychrerythraea (strain 34H / ATCC BAA-681) (Vibrio psychroerythus).